The chain runs to 21 residues: CTCKDMTDKECLYFCHQDIIW.

Disulfide bonds link Cys-1–Cys-15 and Cys-3–Cys-11.

It belongs to the endothelin/sarafotoxin family. As to expression, expressed by the venom gland.

Its subcellular location is the secreted. Functionally, vasoconstrictor activity. These toxins cause cardiac arrest probably as a result of coronary vasospasm. May act by displaying agonistic activities towards endothelin-1 and -2 receptors (EDNRA and EDNRB). In Atractaspis engaddensis (Israeli burrowing asp), this protein is Sarafotoxin-D.